A 519-amino-acid polypeptide reads, in one-letter code: MFLLPLPAAARVAVRHLSVKRLWAPGPAAADMTKGLVLGIYSKEKEEDEPQFTSAGENFNKLVSGKLREILNISGPPLKAGKTRTFYGLHEDFPSVVVVGLGKKTAGIDEQENWHEGKENIRAAVAAGCRQIQDLEIPSVEVDPCGDAQAAAEGAVLGLYEYDDLKQKRKVVVSAKLHGSEDQEAWQRGVLFASGQNLARRLMETPANEMTPTKFAEIVEENLKSASIKTDVFIRPKSWIEEQEMGSFLSVAKGSEEPPVFLEIHYKGSPNASEPPLVFVGKGITFDSGGISIKAAANMDLMRADMGGAATICSAIVSAAKLDLPINIVGLAPLCENMPSGKANKPGDVVRARNGKTIQVDNTDAEGRLILADALCYAHTFNPKVIINAATLTGAMDIALGSGATGVFTNSSWLWNKLFEASIETGDRVWRMPLFEHYTRQVIDCQLADVNNIGKYRSAGACTAAAFLKEFVTHPKWAHLDIAGVMTNKDEVPYLRKGMAGRPTRTLIEFLFRFSQDSA.

The residue at position 42 (Ser42) is a Phosphoserine. Lys45 carries the post-translational modification N6-succinyllysine. Position 54 is a phosphoserine (Ser54). Lys61 and Lys103 each carry N6-succinyllysine. Ser180 and Ser194 each carry phosphoserine. Zn(2+) is bound by residues Leu202, Met203, and Thr205. Ser238 is subject to Phosphoserine. Zn(2+) is bound by residues Lys282 and Asp287. Positions 282, 287, 292, and 294 each coordinate substrate. Mg(2+) is bound at residue Asp287. The active site involves Lys294. Zn(2+)-binding residues include Arg303, Asp305, Asp364, and Glu366. 2 residues coordinate substrate: Asp305 and Asp364. Residues Asp364 and Glu366 each coordinate Mg(2+). The active site involves Arg368. Lys455 bears the N6-acetyllysine; alternate mark. Lys455 carries the post-translational modification N6-succinyllysine; alternate. Residue Lys476 is modified to N6-succinyllysine. At Lys489 the chain carries N6-acetyllysine; alternate. Lys489 bears the N6-succinyllysine; alternate mark.

This sequence belongs to the peptidase M17 family. As to quaternary structure, homohexamer. It depends on Zn(2+) as a cofactor. Mn(2+) serves as cofactor.

It is found in the cytoplasm. It catalyses the reaction Release of an N-terminal amino acid, Xaa-|-Yaa-, in which Xaa is preferably Leu, but may be other amino acids including Pro although not Arg or Lys, and Yaa may be Pro. Amino acid amides and methyl esters are also readily hydrolyzed, but rates on arylamides are exceedingly low.. It carries out the reaction an S-substituted L-cysteinylglycine + H2O = an S-substituted L-cysteine + glycine. The catalysed reaction is L-cysteinylglycine + H2O = L-cysteine + glycine. The enzyme catalyses S-benzyl-L-cysteinylglycine + H2O = S-benzyl-L-cysteine + glycine. It catalyses the reaction Release of N-terminal proline from a peptide.. Zofenoprilat inhibits Cys-Gly hydrolysis activity. In terms of biological role, cytosolic metallopeptidase that catalyzes the removal of unsubstituted N-terminal hydrophobic amino acids from various peptides. The presence of Zn(2+) ions is essential for the peptidase activity, and the association with other cofactors can modulate the substrate spectificity of the enzyme. For instance, in the presence of Mn(2+), it displays a specific Cys-Gly hydrolyzing activity of Cys-Gly-S-conjugates. Involved in the metabolism of glutathione and in the degradation of glutathione S-conjugates, which may play a role in the control of the cell redox status. The sequence is that of Cytosol aminopeptidase from Bos taurus (Bovine).